We begin with the raw amino-acid sequence, 333 residues long: Glycerol-3-phosphate dehydrogenase [NAD(P)+] (333 aa).

NADPH is bound by residues Trp11, Arg34, and Lys107. Lys107, Gly136, and Ser138 together coordinate sn-glycerol 3-phosphate. Ala140 provides a ligand contact to NADPH. Sn-glycerol 3-phosphate contacts are provided by Lys191, Asp244, Ser254, Arg255, and Asn256. The Proton acceptor role is filled by Lys191. Arg255 is an NADPH binding site. Ile279 and Glu281 together coordinate NADPH.

Belongs to the NAD-dependent glycerol-3-phosphate dehydrogenase family.

It is found in the cytoplasm. The catalysed reaction is sn-glycerol 3-phosphate + NAD(+) = dihydroxyacetone phosphate + NADH + H(+). The enzyme catalyses sn-glycerol 3-phosphate + NADP(+) = dihydroxyacetone phosphate + NADPH + H(+). It functions in the pathway membrane lipid metabolism; glycerophospholipid metabolism. Its function is as follows. Catalyzes the reduction of the glycolytic intermediate dihydroxyacetone phosphate (DHAP) to sn-glycerol 3-phosphate (G3P), the key precursor for phospholipid synthesis. The polypeptide is Glycerol-3-phosphate dehydrogenase [NAD(P)+] (Nitrosospira multiformis (strain ATCC 25196 / NCIMB 11849 / C 71)).